A 206-amino-acid polypeptide reads, in one-letter code: uncharacterized protein (206 aa).

A signal peptide spans 1–22 (MPKLRLIGLTLLALSATAVSHA). In terms of domain architecture, SH3b spans 23–89 (EETRYVSDEL…IPLKQLSTEP (67 aa)). Residues 169-191 (IIMQWFMYGGGVLGLGLLLGLVL) traverse the membrane as a helical segment.

This sequence to H.influenzae HI_1605.

The protein localises to the membrane. This is an uncharacterized protein from Escherichia coli O157:H7.